We begin with the raw amino-acid sequence, 122 residues long: MTAATRQEVLCLYRSIFRLARKWQAASGQMEDTIEEKQYILKEARTLFQKNKNLTDPELIKQCIVECTARIEIGLHYQIPYPRPIHLPPMGLTARRGRGLQTQEKLRKLSKPVYLKSHDEVS.

The protein belongs to the complex I LYR family.

May promote cell proliferation and inhibition of apoptosis of preadipocytes. The sequence is that of LYR motif-containing protein 1 (Lyrm1) from Mus musculus (Mouse).